The sequence spans 184 residues: MESFSSKSLVLQAEKKLLSKMAGRSVAHLFADETSSEVLDELYRVSKEYTRSRPQAQRVIKDLIKVAVKVAVLHRSGCFNPSELALATRFRQKLRQGAMTALSFGEVDFTFEAAVLASLLTECRDVLLELVERHLTPKSHGRIRHVFDHFSDAGLLTALYGPDYTQHLGKICGGLRKLLDEGKL.

At S3 the chain carries Phosphoserine.

This sequence belongs to the TNFAIP8 family. TNFAIP8L2 subfamily. May interact with CASP8; however, such result is unclear since could not reproduce the interaction with CASP8. Interacts with RAC1. In terms of processing, phosphorylated by TAK1/MAP3K7; this phosphorylation triggers association with BTRC and subsequent ubiquitination and degradation. Post-translationally, ubiquitinated in a BTRC-depdent manner; leading to degradation mediated through the proteasome pathway.

The protein resides in the cytoplasm. The protein localises to the nucleus. Its subcellular location is the lysosome. In terms of biological role, acts as a negative regulator of innate and adaptive immunity by maintaining immune homeostasis. Plays a regulatory role in the Toll-like signaling pathway by determining the strength of LPS-induced signaling and gene expression. Inhibits TCR-mediated T-cell activation and negatively regulate T-cell function to prevent hyperresponsiveness. Also inhibits autolysosome formation via negatively modulating MTOR activation by interacting with RAC1 and promoting the disassociation of the RAC1-MTOR complex. Plays an essential role in NK-cell biology by acting as a checkpoint and displaying an expression pattern correlating with NK-cell maturation process and by negatively regulating NK-cell maturation and antitumor immunity. Mechanistically, suppresses IL-15-triggered mTOR activity in NK-cells. In Bos taurus (Bovine), this protein is Tumor necrosis factor alpha-induced protein 8-like protein 2 (TNFAIP8L2).